A 337-amino-acid polypeptide reads, in one-letter code: tRNA pseudouridine synthase D (337 aa).

The active-site Nucleophile is Asp77. Residues 152-308 (GFPNYFTEQR…ARDFHWEFVE (157 aa)) form the TRUD domain.

It belongs to the pseudouridine synthase TruD family.

It carries out the reaction uridine(13) in tRNA = pseudouridine(13) in tRNA. Responsible for synthesis of pseudouridine from uracil-13 in transfer RNAs. The protein is tRNA pseudouridine synthase D of Mannheimia succiniciproducens (strain KCTC 0769BP / MBEL55E).